Consider the following 298-residue polypeptide: U1 small nuclear ribonucleoprotein A (298 aa).

RRM domains lie at 2 to 113 and 227 to 298; these read SALY…KART and KVLL…GFAK.

The protein belongs to the RRM U1 A/B'' family. In terms of assembly, component of the spliceosome where it is associated with snRNP U1.

The protein localises to the nucleus. Its function is as follows. Involved in nuclear mRNA splicing. The principal role of the U1A is to help fold or maintain U1 RNA in an active configuration. It is the first snRNP to interact with pre-mRNA. This interaction is required for the subsequent binding of U2 snRNP and the U4/U6/U5 tri-snRNP. The sequence is that of U1 small nuclear ribonucleoprotein A (MUD1) from Saccharomyces cerevisiae (strain ATCC 204508 / S288c) (Baker's yeast).